The primary structure comprises 747 residues: Myotubularin-related protein 12 (747 aa).

The segment covering 1-14 (MLGKGVVGGGGGTK) has biased composition (gly residues). A disordered region spans residues 1-21 (MLGKGVVGGGGGTKGPKPSFV). The Myotubularin phosphatase domain maps to 205-643 (FDTLKDWCWE…PEIKVWAQRY (439 aa)). An interaction with MTM1 region spans residues 449–558 (VPVFLLFLDC…KGQRKGMRFK (110 aa)). 3 positions are modified to phosphoserine: Ser564, Ser601, and Ser716.

Belongs to the protein-tyrosine phosphatase family. Non-receptor class myotubularin subfamily. As to quaternary structure, heterodimer with lipid phosphatase MTM1. Heterodimer with lipid phosphatase MTMR2.

Its subcellular location is the cytoplasm. The protein localises to the sarcoplasmic reticulum. The protein resides in the myofibril. It is found in the sarcomere. Its function is as follows. Acts as an adapter for the myotubularin-related phosphatases. Regulates phosphatase MTM1 protein stability and possibly its intracellular location. By stabilizing MTM1 protein levels, required for skeletal muscle maintenance but not for myogenesis. The chain is Myotubularin-related protein 12 (MTMR12) from Pongo abelii (Sumatran orangutan).